The following is a 124-amino-acid chain: Holo-[acyl-carrier-protein] synthase (124 aa).

Mg(2+) is bound by residues Asp-8 and Glu-56.

This sequence belongs to the P-Pant transferase superfamily. AcpS family. Mg(2+) serves as cofactor.

The protein resides in the cytoplasm. It catalyses the reaction apo-[ACP] + CoA = holo-[ACP] + adenosine 3',5'-bisphosphate + H(+). Its function is as follows. Transfers the 4'-phosphopantetheine moiety from coenzyme A to a Ser of acyl-carrier-protein. The sequence is that of Holo-[acyl-carrier-protein] synthase from Clostridium acetobutylicum (strain ATCC 824 / DSM 792 / JCM 1419 / IAM 19013 / LMG 5710 / NBRC 13948 / NRRL B-527 / VKM B-1787 / 2291 / W).